Here is a 175-residue protein sequence, read N- to C-terminus: Large ribosomal subunit protein bL17m (175 aa).

Residues 1–8 (MRLSVCAA) constitute a mitochondrion transit peptide. Residues 155–175 (DLSQSQEASNHSSHTAQTPGI) are disordered. Over residues 157–175 (SQSQEASNHSSHTAQTPGI) the composition is skewed to polar residues.

Belongs to the bacterial ribosomal protein bL17 family. Component of the mitochondrial ribosome large subunit (39S) which comprises a 16S rRNA and about 50 distinct proteins.

It localises to the mitochondrion. This Pongo abelii (Sumatran orangutan) protein is Large ribosomal subunit protein bL17m (MRPL17).